A 390-amino-acid chain; its full sequence is Heme chaperone HemW (390 aa).

The Radical SAM core domain maps to Pro-15–Ala-254. Tyr-24 contacts S-adenosyl-L-methionine. Residues Cys-30, Cys-34, and Cys-37 each contribute to the [4Fe-4S] cluster site. S-adenosyl-L-methionine contacts are provided by residues Gly-82, Gly-83–Thr-84, Glu-115, Gln-142, Arg-154, and Asp-179.

This sequence belongs to the anaerobic coproporphyrinogen-III oxidase family. HemW subfamily. Requires [4Fe-4S] cluster as cofactor.

The protein resides in the cytoplasm. Functionally, probably acts as a heme chaperone, transferring heme to an unknown acceptor. Binds one molecule of heme per monomer, possibly covalently. Binds 1 [4Fe-4S] cluster. The cluster is coordinated with 3 cysteines and an exchangeable S-adenosyl-L-methionine. The sequence is that of Heme chaperone HemW from Mycobacterium tuberculosis (strain CDC 1551 / Oshkosh).